Reading from the N-terminus, the 346-residue chain is Dimethyladenosine transferase 1, mitochondrial (346 aa).

A mitochondrion-targeting transit peptide spans 1–27 (MATQGVLAKYRLPPLPTIGEIIKLFNL). N36, L38, G63, E85, K86, D111, I112, and N141 together coordinate S-adenosyl-L-methionine.

It belongs to the class I-like SAM-binding methyltransferase superfamily. rRNA adenine N(6)-methyltransferase family. KsgA subfamily.

It localises to the mitochondrion. It catalyses the reaction adenosine(N)/adenosine(N+1) in rRNA + 4 S-adenosyl-L-methionine = N(6)-dimethyladenosine(N)/N(6)-dimethyladenosine(N+1) in rRNA + 4 S-adenosyl-L-homocysteine + 4 H(+). Its function is as follows. Mitochondrial methyltransferase which uses S-adenosyl methionine to dimethylate two highly conserved adjacent adenosine residues (A1583 and A1584) within the loop of helix 45 at the 3-prime end of 12S rRNA, thereby regulating the assembly or stability of the small subunit of the mitochondrial ribosome. Also required for basal transcription of mitochondrial DNA, probably via its interaction with POLRMT and TFAM. Stimulates transcription independently of the methyltransferase activity. The protein is Dimethyladenosine transferase 1, mitochondrial (tfb1m) of Xenopus tropicalis (Western clawed frog).